A 490-amino-acid chain; its full sequence is Cytochrome P450 2C50 (490 aa).

Phosphoserine is present on serine 127. N6-acetyllysine occurs at positions 249 and 375. Cysteine 435 is a binding site for heme.

It belongs to the cytochrome P450 family. It depends on heme as a cofactor. As to expression, expressed in heart and liver.

It localises to the endoplasmic reticulum membrane. Its subcellular location is the microsome membrane. The catalysed reaction is an organic molecule + reduced [NADPH--hemoprotein reductase] + O2 = an alcohol + oxidized [NADPH--hemoprotein reductase] + H2O + H(+). Metabolizes arachidonic acid to several midchain and omega-terminal hydroxyeicosatetraenoic acids (HETE). This is Cytochrome P450 2C50 from Mus musculus (Mouse).